The primary structure comprises 102 residues: Small ribosomal subunit protein uS10 (102 aa).

It belongs to the universal ribosomal protein uS10 family. As to quaternary structure, part of the 30S ribosomal subunit.

Its function is as follows. Involved in the binding of tRNA to the ribosomes. The sequence is that of Small ribosomal subunit protein uS10 from Coprothermobacter proteolyticus (strain ATCC 35245 / DSM 5265 / OCM 4 / BT).